The chain runs to 271 residues: Calretinin (271 aa).

EF-hand domains are found at residues 16–51 (LTASQFLEIWKHFDADGNGYIEGKELENFFQELEKA), 63–98 (NFGEKMKEFMQKYDKNSDGKIEMAELAQILPTEENF), 107–142 (GSSAEFMEAWRKYDTDRSGYIEANELKGFLSDLLKK), 151–186 (KLQEYTQTILRMFDLNGDGKLGLSEMSRLLPVQENF), 195–230 (LTSEEFNAIFTFYDKDRSGYIDEHELDALLKDLYEK), and 235–270 (MNIQQLTNYRKSVMSLAEAGKLYRKDLEIVLCSEPP). Ca(2+) contacts are provided by D29, D31, N33, Y35, E40, D76, N78, D80, K82, E87, D120, D122, S124, Y126, E131, D164, N166, D168, K170, E175, D208, D210, S212, Y214, and E219. Residue Y214 is modified to Phosphotyrosine.

The protein belongs to the calbindin family. As to expression, brain.

Its subcellular location is the synapse. It is found in the cell projection. The protein resides in the dendrite. Calcium-binding protein involved in calcium homeostasis and signal transduction. It plays a critical role in buffering intracellular calcium levels and modulating calcium-dependent signaling pathways. Predominantly expressed in specific neuronal populations, influences synaptic plasticity and neuronal excitability, contributing to learning and memory. During embryonic development, it facilitates neuronal differentiation and maturation. This chain is Calretinin, found in Homo sapiens (Human).